Here is a 101-residue protein sequence, read N- to C-terminus: UPF0473 protein SUB1774 (101 aa).

The protein belongs to the UPF0473 family.

The protein is UPF0473 protein SUB1774 of Streptococcus uberis (strain ATCC BAA-854 / 0140J).